A 501-amino-acid chain; its full sequence is Endoglucanase 1 (501 aa).

A signal peptide spans 1 to 29; it reads MALYLSSSRLITFLSFILLLSNGFSSSSS. Asp96 serves as the catalytic Nucleophile. Residues His422, Asp473, and Glu482 contribute to the active site.

The protein belongs to the glycosyl hydrolase 9 (cellulase E) family.

It is found in the secreted. The enzyme catalyses Endohydrolysis of (1-&gt;4)-beta-D-glucosidic linkages in cellulose, lichenin and cereal beta-D-glucans.. The polypeptide is Endoglucanase 1 (CEL2) (Arabidopsis thaliana (Mouse-ear cress)).